The sequence spans 370 residues: Fe(2+) transport protein 2 (370 aa).

An N-terminal signal peptide occupies residues 1–25 (MMMSSSQTPVRIAFVFLVILAATDA). The Extracellular portion of the chain corresponds to 26-55 (HSDHRTPPPACGGAAVGGECHSVARALRLK). The helical transmembrane segment at 56-76 (LIAIPAILAASVAGVCLPLFA) threads the bilayer. Residues 77–85 (RSVPALRPD) are Cytoplasmic-facing. A helical transmembrane segment spans residues 86–106 (GGLFAVVKAFASGVILGTGYM). The Extracellular segment spans residues 107–130 (HVLPDSFNDLTSPCLPRKPWSEFP). The chain crosses the membrane as a helical span at residues 131-151 (FAAFVAMLAAVFTLMVDSLML). At 152 to 215 (TFHTRGSKGR…TTKAQLLRNR (64 aa)) the chain is on the cytoplasmic side. A helical transmembrane segment spans residues 216-236 (VIVQVLEMGIVVHSVVIGLGM). The Extracellular portion of the chain corresponds to 237–247 (GASQNVCTIRP). Residues 248–268 (LVAALCFHQMFEGMGLGGCIL) traverse the membrane as a helical segment. The Cytoplasmic portion of the chain corresponds to 269–278 (QAGYGGRTRS). The chain crosses the membrane as a helical span at residues 279-299 (ALVFFFSTTTPFGIALGLALT). Residues 300–309 (RVYSDSSPTA) lie on the Extracellular side of the membrane. Residues 310-330 (LVVVGLLNAASAGLLHYMALV) traverse the membrane as a helical segment. Residues 331–349 (ELLAADFMGPKLQGNVRLQ) lie on the Cytoplasmic side of the membrane. Residues 350-370 (LAASLAILLGAGGMSVMAKWA) form a helical membrane-spanning segment.

It belongs to the ZIP transporter (TC 2.A.5) family.

It localises to the cell membrane. Iron transporter that may play a role in the uptake of iron from the rhizosphere across the plasma membrane in the root epidermal layer. This Oryza sativa subsp. japonica (Rice) protein is Fe(2+) transport protein 2 (IRT2).